Consider the following 504-residue polypeptide: ATP synthase subunit alpha, chloroplastic (504 aa).

170 to 177 (GDRQTGKT) contributes to the ATP binding site.

It belongs to the ATPase alpha/beta chains family. In terms of assembly, F-type ATPases have 2 components, CF(1) - the catalytic core - and CF(0) - the membrane proton channel. CF(1) has five subunits: alpha(3), beta(3), gamma(1), delta(1), epsilon(1). CF(0) has four main subunits: a, b, b' and c.

It localises to the plastid. Its subcellular location is the chloroplast thylakoid membrane. The enzyme catalyses ATP + H2O + 4 H(+)(in) = ADP + phosphate + 5 H(+)(out). In terms of biological role, produces ATP from ADP in the presence of a proton gradient across the membrane. The alpha chain is a regulatory subunit. This is ATP synthase subunit alpha, chloroplastic from Cyanidium caldarium (Red alga).